Here is a 466-residue protein sequence, read N- to C-terminus: Soluble pyridine nucleotide transhydrogenase (466 aa).

FAD is bound at residue 36-45 (ERYHNVGGGC).

The protein belongs to the class-I pyridine nucleotide-disulfide oxidoreductase family. Requires FAD as cofactor.

The protein resides in the cytoplasm. The catalysed reaction is NAD(+) + NADPH = NADH + NADP(+). Functionally, conversion of NADPH, generated by peripheral catabolic pathways, to NADH, which can enter the respiratory chain for energy generation. The polypeptide is Soluble pyridine nucleotide transhydrogenase (Citrobacter koseri (strain ATCC BAA-895 / CDC 4225-83 / SGSC4696)).